Reading from the N-terminus, the 142-residue chain is Small ribosomal subunit protein uS12 (142 aa).

This sequence belongs to the universal ribosomal protein uS12 family. Part of the 30S ribosomal subunit.

In terms of biological role, with S4 and S5 plays an important role in translational accuracy. Located at the interface of the 30S and 50S subunits. The chain is Small ribosomal subunit protein uS12 from Methanospirillum hungatei JF-1 (strain ATCC 27890 / DSM 864 / NBRC 100397 / JF-1).